A 236-amino-acid polypeptide reads, in one-letter code: Leucyl/phenylalanyl-tRNA--protein transferase (236 aa).

This sequence belongs to the L/F-transferase family.

The protein localises to the cytoplasm. The enzyme catalyses N-terminal L-lysyl-[protein] + L-leucyl-tRNA(Leu) = N-terminal L-leucyl-L-lysyl-[protein] + tRNA(Leu) + H(+). The catalysed reaction is N-terminal L-arginyl-[protein] + L-leucyl-tRNA(Leu) = N-terminal L-leucyl-L-arginyl-[protein] + tRNA(Leu) + H(+). It catalyses the reaction L-phenylalanyl-tRNA(Phe) + an N-terminal L-alpha-aminoacyl-[protein] = an N-terminal L-phenylalanyl-L-alpha-aminoacyl-[protein] + tRNA(Phe). Functionally, functions in the N-end rule pathway of protein degradation where it conjugates Leu, Phe and, less efficiently, Met from aminoacyl-tRNAs to the N-termini of proteins containing an N-terminal arginine or lysine. This chain is Leucyl/phenylalanyl-tRNA--protein transferase, found in Shewanella sp. (strain ANA-3).